Reading from the N-terminus, the 586-residue chain is Actin-related protein 9 (586 aa).

Positions 141–169 (STPIVDKDADVDPLQRSTPDDTEPNSEEN) are disordered.

This sequence belongs to the actin family. ARP8 subfamily.

The chain is Actin-related protein 9 (ARP9) from Oryza sativa subsp. indica (Rice).